The sequence spans 123 residues: Small ribosomal subunit protein uS12 (123 aa).

Positions 1 to 22 (MATINQLVRQPRKRSVEKSDVP) are disordered. Asp-89 is modified (3-methylthioaspartic acid). The segment at 100–123 (GSLDTSGVKGRNQGRSKYGTKRPK) is disordered. The segment covering 111–123 (NQGRSKYGTKRPK) has biased composition (basic residues).

Belongs to the universal ribosomal protein uS12 family. Part of the 30S ribosomal subunit. Contacts proteins S8 and S17. May interact with IF1 in the 30S initiation complex.

Its function is as follows. With S4 and S5 plays an important role in translational accuracy. Interacts with and stabilizes bases of the 16S rRNA that are involved in tRNA selection in the A site and with the mRNA backbone. Located at the interface of the 30S and 50S subunits, it traverses the body of the 30S subunit contacting proteins on the other side and probably holding the rRNA structure together. The combined cluster of proteins S8, S12 and S17 appears to hold together the shoulder and platform of the 30S subunit. This is Small ribosomal subunit protein uS12 from Pseudomonas entomophila (strain L48).